Reading from the N-terminus, the 479-residue chain is Small ribosomal subunit protein bS1 (479 aa).

S1 motif domains are found at residues 36–105, 123–188, 209–277, and 294–363; these read GDIV…LSKK, DEAV…LSRR, GAIR…LSLK, and GQIV…LSLK. The segment at 429-466 is disordered; sequence TAQMEKFAAAEAEAANAPVSNGSSRSEESSGGTLASDA. A compositionally biased stretch (low complexity) spans 437–460; sequence AAEAEAANAPVSNGSSRSEESSGG.

The protein belongs to the bacterial ribosomal protein bS1 family. In terms of assembly, binds uncharacterized protein MSMEG_2731/MSMEI_2664.

Its function is as follows. Binds mRNA, facilitating recognition of most mRNAs by the 30S ribosomal subunit during translation initiation. Plays a role in trans-translation; binds tmRNA (the product of the ssrA gene). Binds very poorly to pyrazinoic acid (POA), the active form of the prodrug pyrazinamide (PZA); POA does not disrupt trans-translation in this organism. M.smegmatis is resistant to the antibiotic PZA. In trans-translation Ala-aminoacylated transfer-messenger RNA (tmRNA, product of the ssrA gene; the 2 termini fold to resemble tRNA(Ala) while it encodes a short internal open reading frame (the tag peptide)) acts like a tRNA, entering the A-site of the ribosome and displacing the stalled mRNA (which is subsequently degraded). The ribosome then switches to translate the ORF on the tmRNA, the nascent peptide is terminated with the 'tag peptide' encoded by the tmRNA and thus targeted for degradation. This chain is Small ribosomal subunit protein bS1 (rpsA), found in Mycolicibacterium smegmatis (strain ATCC 700084 / mc(2)155) (Mycobacterium smegmatis).